The sequence spans 475 residues: MAPQTETKAGTGFKAGVKDYRLTYYTPDYQVKDTDILAAFRMTPQPGVPVEEAGAAVAAESSTGTWTTVWTDGLTSLDRYKGRCYDIEPVPGEDNQYIAYIAYPLDLFEEGSVTNLFTSIVGNVFGFKALRALRLEDLRIPPAYTKTFQGPPHGIQVERDKLNKYGRGLLGCTIKPKLGLSAKNYGRAVYECLRGGLDFTKDDENVTSQPFMRWRDRFLFCAEAIYKSQAETGEVKGHYLNSTAGTCESMMDRAQFAKDLGVPIVMHDYLTGGLTANTSLAIYCRNNGLLLHIHRAMHAVIDRQRNHGIHFRVLAKALRLSGGDHLHSGTVVGKLEGEREITLGFVDLMRDDYIEKDRSRGIYFTQDWASLPGTMPVASGGIHVWHMPALVDIFGDDACLQFGGGTLGHPWGNACGAAANRVALEACTQARNEGRDLAREGGDVIRAACKWSPELAAACEVWKEIKFEFDTVDKL.

Positions 1–2 (MA) are excised as a propeptide. The residue at position 3 (Pro3) is an N-acetylproline. Position 14 is an N6,N6,N6-trimethyllysine (Lys14). Residues Asn123 and Thr173 each coordinate substrate. Lys175 functions as the Proton acceptor in the catalytic mechanism. Position 177 (Lys177) interacts with substrate. Residues Lys201, Asp203, and Glu204 each coordinate Mg(2+). The residue at position 201 (Lys201) is an N6-carboxylysine. His294 (proton acceptor) is an active-site residue. Residues Arg295, His327, and Ser379 each contribute to the substrate site.

This sequence belongs to the RuBisCO large chain family. Type I subfamily. As to quaternary structure, heterohexadecamer of 8 large chains and 8 small chains; disulfide-linked. The disulfide link is formed within the large subunit homodimers. The cofactor is Mg(2+). In terms of processing, the disulfide bond which can form in the large chain dimeric partners within the hexadecamer appears to be associated with oxidative stress and protein turnover.

It localises to the plastid. The protein resides in the chloroplast. The catalysed reaction is 2 (2R)-3-phosphoglycerate + 2 H(+) = D-ribulose 1,5-bisphosphate + CO2 + H2O. The enzyme catalyses D-ribulose 1,5-bisphosphate + O2 = 2-phosphoglycolate + (2R)-3-phosphoglycerate + 2 H(+). Its function is as follows. RuBisCO catalyzes two reactions: the carboxylation of D-ribulose 1,5-bisphosphate, the primary event in carbon dioxide fixation, as well as the oxidative fragmentation of the pentose substrate in the photorespiration process. Both reactions occur simultaneously and in competition at the same active site. This is Ribulose bisphosphate carboxylase large chain from Tupiella akineta (Green alga).